The chain runs to 394 residues: Elongation factor Tu (394 aa).

A tr-type G domain is found at 10–205 (KPHVNIGTIG…VDTWIPLPPR (196 aa)). The tract at residues 19 to 26 (GHVDHGKT) is G1. 19–26 (GHVDHGKT) lines the GTP pocket. Residue T26 coordinates Mg(2+). The tract at residues 60 to 64 (GITIN) is G2. A G3 region spans residues 81 to 84 (DCPG). Residues 81 to 85 (DCPGH) and 136 to 139 (NKCD) contribute to the GTP site. The segment at 136–139 (NKCD) is G4. Residues 174–176 (SAL) form a G5 region.

This sequence belongs to the TRAFAC class translation factor GTPase superfamily. Classic translation factor GTPase family. EF-Tu/EF-1A subfamily. In terms of assembly, monomer.

The protein localises to the cytoplasm. It carries out the reaction GTP + H2O = GDP + phosphate + H(+). GTP hydrolase that promotes the GTP-dependent binding of aminoacyl-tRNA to the A-site of ribosomes during protein biosynthesis. In Bacteroides fragilis (strain ATCC 25285 / DSM 2151 / CCUG 4856 / JCM 11019 / LMG 10263 / NCTC 9343 / Onslow / VPI 2553 / EN-2), this protein is Elongation factor Tu.